The primary structure comprises 767 residues: Golgin subfamily A member 1 (767 aa).

The tract at residues 13–58 (TAVAQRPGGATRIPRSVSKESVASMGADSGDDFASDGSSSREDLSS) is disordered. Ser-30, Ser-36, Ser-41, Ser-47, Ser-50, and Ser-51 each carry phosphoserine. Positions 50-657 (SSSREDLSSQ…RKTLQKELKI (608 aa)) form a coiled coil. A GRIP domain is found at 688 to 737 (TDAREINFEYLKHVVLKFMSCRESEAFHLIKAVSVLLNFSQEEENMLKET). A disordered region spans residues 748-767 (KPAPKGSIRPSISNPRIPWS).

In terms of assembly, interacts with RAB6A. Directly interacts with TBC1D23. Interacts with FAM91A1; this interaction may be mediated by TBC1D23. Interacts with ARL1; this interaction recruits Golgin-97/GOLGA1 onto the Golgi apparatus. Post-translationally, MARylated by PARP12; MARylation is required for basolateral export of E-Cadherin.

Its subcellular location is the golgi apparatus membrane. The protein resides in the golgi apparatus. It is found in the trans-Golgi network membrane. It localises to the cytoplasmic vesicle. The protein localises to the secretory vesicle. Its subcellular location is the acrosome. In terms of biological role, involved in vesicular trafficking at the Golgi apparatus level. Involved in endosome-to-Golgi trafficking. Mechanistically, captures transport vesicles arriving from endosomes via the protein TBC1D23. Recognized vesicles are then tethered to the trans-Golgi before subsequent SNARE engagement and vesicle fusion. Selectively regulates E-cadherin transport from the trans-Golgi network in tubulovesicular carriers. Its function is as follows. (Microbial infection) Plays an important role in poxvirus morphogenesis. Translocates into the viral factories where it may transport the membrane fragments and associated protein factors important for virus maturation to the sites of virion assembly. The chain is Golgin subfamily A member 1 (GOLGA1) from Homo sapiens (Human).